The primary structure comprises 222 residues: Voltage-dependent calcium channel gamma-1 subunit (222 aa).

Topologically, residues 1–10 (MSQTKMLKVR) are cytoplasmic. The chain crosses the membrane as a helical span at residues 11–29 (VTLFCILAGIVLAMTAVVT). The Extracellular portion of the chain corresponds to 30–108 (DHWAVLSPHM…TQKEYSISAA (79 aa)). N-linked (GlcNAc...) asparagine glycans are attached at residues asparagine 43 and asparagine 79. An intrachain disulfide couples cysteine 57 to cysteine 80. A helical membrane pass occupies residues 109–129 (AIAIFSLGFIILGSLCVLLSL). Residues 130 to 134 (GKKRD) lie on the Cytoplasmic side of the membrane. Residues 135–155 (YLLRPASMFYAFAGLCILVSV) traverse the membrane as a helical segment. Residues 156–179 (EVMRQSVKRMIDSEDTVWIEYYYS) are Extracellular-facing. Residues 180–204 (WSFACACAAFILLFLGGLALLLFSL) traverse the membrane as a helical segment. The Cytoplasmic segment spans residues 205–222 (PRMPRNPWESCMDAEPEH).

The protein belongs to the PMP-22/EMP/MP20 family. CACNG subfamily. As to quaternary structure, component of a calcium channel complex consisting of a pore-forming alpha subunit (CACNA1S) and the ancillary subunits CACNB1 or CACNB2, CACNG1 and CACNA2D1. The channel complex contains alpha, beta, gamma and delta subunits in a 1:1:1:1 ratio, i.e. it contains either CACNB1 or CACNB2. Post-translationally, N-glycosylated. Skeletal muscle.

The protein localises to the cell membrane. Its subcellular location is the sarcolemma. Functionally, regulatory subunit of the voltage-gated calcium channel that gives rise to L-type calcium currents in skeletal muscle. Regulates channel inactivation kinetics. The polypeptide is Voltage-dependent calcium channel gamma-1 subunit (CACNG1) (Homo sapiens (Human)).